The primary structure comprises 419 residues: MDKFRVQGPTTLQGEVTISGAKNAALPILFAALLAEEPVEIQNVPKLKDIDTTMKLLSQLGTKVERNGSVWIDASQVNIFCAPYELVKTMRASIWALGPLVARFGQGQVSLPGGCAIGARPVDLHITGLEQLGAEIKLEEGYVKASVNGRLKGAHIVMDKVSVGATVTIMSAATLAEGTTVIENAAREPEIVDTANFLVTLGAKISGQGTDRITIEGVERLGGGVYRVLPDRIETGTFLVAAAISGGKIVCRNAQPDTLDAVLAKLRDAGADIETGEDWISLDMHGQRPKAVNVRTAPHPAFPTDMQAQFTLLNLVAEGTGFITETIFENRFMHVPELIRMGAHAEIESNTVICHGVEKLSGAQVMATDLRASASLVLAGCIAEGTTLVDRIYHIDRGYERIEDKLRALGANIERVKGE.

Residue lysine 22–asparagine 23 participates in phosphoenolpyruvate binding. UDP-N-acetyl-alpha-D-glucosamine is bound at residue arginine 91. Residue cysteine 115 is the Proton donor of the active site. Residue cysteine 115 is modified to 2-(S-cysteinyl)pyruvic acid O-phosphothioketal. Residues arginine 120 to leucine 124, lysine 160 to valine 163, aspartate 305, and isoleucine 327 contribute to the UDP-N-acetyl-alpha-D-glucosamine site.

It belongs to the EPSP synthase family. MurA subfamily.

It localises to the cytoplasm. The catalysed reaction is phosphoenolpyruvate + UDP-N-acetyl-alpha-D-glucosamine = UDP-N-acetyl-3-O-(1-carboxyvinyl)-alpha-D-glucosamine + phosphate. Its pathway is cell wall biogenesis; peptidoglycan biosynthesis. Its function is as follows. Cell wall formation. Adds enolpyruvyl to UDP-N-acetylglucosamine. The polypeptide is UDP-N-acetylglucosamine 1-carboxyvinyltransferase (Citrobacter koseri (strain ATCC BAA-895 / CDC 4225-83 / SGSC4696)).